Consider the following 241-residue polypeptide: 3-deoxy-D-manno-octulosonic acid kinase (241 aa).

Residue Asp-171 is part of the active site.

The protein belongs to the protein kinase superfamily. KdkA/RfaP family.

The protein localises to the cell inner membrane. It catalyses the reaction an alpha-Kdo-(2-&gt;6)-lipid IVA + ATP = a 4-O-phospho-alpha-Kdo-(2-&gt;6)-lipid IVA + ADP + H(+). Its pathway is bacterial outer membrane biogenesis; LPS core biosynthesis. Its function is as follows. Catalyzes the ATP-dependent phosphorylation of the 3-deoxy-D-manno-octulosonic acid (Kdo) residue in Kdo-lipid IV(A) at the 4-OH position. This Haemophilus influenzae (strain PittGG) protein is 3-deoxy-D-manno-octulosonic acid kinase.